An 83-amino-acid chain; its full sequence is High-potential iron-sulfur protein (83 aa).

4 residues coordinate [4Fe-4S] cluster: C43, C46, C61, and C75.

Belongs to the high-potential iron-sulfur protein (HiPIP) family. Homodimer.

Functionally, specific class of high-redox-potential 4Fe-4S ferredoxins. Functions in anaerobic electron transport in most purple and in some other photosynthetic bacteria and in at least one genus (Paracoccus) of halophilic, denitrifying bacteria. The protein is High-potential iron-sulfur protein (hip) of Thermochromatium tepidum (Chromatium tepidum).